A 212-amino-acid polypeptide reads, in one-letter code: Ras-related protein Rab-15 (212 aa).

GTP contacts are provided by serine 17, glycine 18, valine 19, glycine 20, lysine 21, threonine 22, cysteine 23, serine 35, serine 39, and threonine 40. A Mg(2+)-binding site is contributed by threonine 22. Short sequence motifs (switch) lie at residues 31–45 and 63–80; these read NEFH…GVDF and DTAG…YYRR. Residues threonine 40 and aspartate 63 each coordinate Mg(2+). Residues glycine 66, asparagine 121, lysine 122, aspartate 124, serine 151, and alanine 152 each coordinate GTP. A disordered region spans residues 193–212; it reads LEEEEGKPEGPANSSKTCWC. S-geranylgeranyl cysteine attachment occurs at residues cysteine 210 and cysteine 212. Cysteine 212 bears the Cysteine methyl ester mark.

Belongs to the small GTPase superfamily. Rab family. As to quaternary structure, the GTP bound form of RAB15 interacts with REP15. Interacts (GTP-bound form) with MICAL1, MICAL3, MICALCL, EHBP1 and EHBP1L1. Mg(2+) serves as cofactor.

Its subcellular location is the cell membrane. The catalysed reaction is GTP + H2O = GDP + phosphate + H(+). With respect to regulation, regulated by guanine nucleotide exchange factors (GEFs) which promote the exchange of bound GDP for free GTP. Regulated by GTPase activating proteins (GAPs) which increase the GTP hydrolysis activity. Inhibited by GDP dissociation inhibitors (GDIs). In terms of biological role, the small GTPases Rab are key regulators of intracellular membrane trafficking, from the formation of transport vesicles to their fusion with membranes. Rabs cycle between an inactive GDP-bound form and an active GTP-bound form that is able to recruit to membranes different sets of downstream effectors directly responsible for vesicle formation, movement, tethering and fusion. RAB15 may act in concert with RAB3A in regulating aspects of synaptic vesicle membrane flow within the nerve terminal. The protein is Ras-related protein Rab-15 of Homo sapiens (Human).